The sequence spans 358 residues: Arginine kinase (358 aa).

Positions 2 to 84 (SDADLFSKLD…LDEVIKDYHK (83 aa)) constitute a Phosphagen kinase N-terminal domain. 57–61 (GVGIY) contributes to the substrate binding site. A Phosphagen kinase C-terminal domain is found at 112–350 (FIVSTRVRVG…EEILKREKEL (239 aa)). ATP contacts are provided by residues 115–119 (STRVR) and His-178. Glu-218 serves as a coordination point for substrate. ATP is bound at residue Arg-222. A substrate-binding site is contributed by Cys-265. Residues 274-278 (RASVH) and 303-308 (RGIHGE) each bind ATP. Position 308 (Glu-308) interacts with substrate.

The protein belongs to the ATP:guanido phosphotransferase family.

It carries out the reaction L-arginine + ATP = N(omega)-phospho-L-arginine + ADP + H(+). This chain is Arginine kinase, found in Turbo cornutus (Horned turban).